We begin with the raw amino-acid sequence, 96 residues long: Transmembrane protein PMIS2 (96 aa).

A run of 2 helical transmembrane segments spans residues 31 to 51 (VMLA…AIYF) and 76 to 96 (WFNM…VLVL).

Belongs to the CD225/Dispanin family. In terms of tissue distribution, specifically expressed in testis.

The protein resides in the membrane. Its function is as follows. May play a role in spermatozoa mobility. This chain is Transmembrane protein PMIS2, found in Mus musculus (Mouse).